A 274-amino-acid chain; its full sequence is Thiamine kinase (274 aa).

It belongs to the thiamine kinase family.

It carries out the reaction thiamine + ATP = thiamine phosphate + ADP + H(+). Its pathway is cofactor biosynthesis; thiamine diphosphate biosynthesis; thiamine phosphate from thiamine: step 1/1. In terms of biological role, catalyzes the ATP-dependent phosphorylation of thiamine to thiamine phosphate. Is involved in thiamine salvage. This Shigella flexneri serotype 5b (strain 8401) protein is Thiamine kinase.